The sequence spans 232 residues: Putative N-acetylmannosamine-6-phosphate 2-epimerase (232 aa).

Belongs to the NanE family.

The catalysed reaction is an N-acyl-D-glucosamine 6-phosphate = an N-acyl-D-mannosamine 6-phosphate. Its pathway is amino-sugar metabolism; N-acetylneuraminate degradation; D-fructose 6-phosphate from N-acetylneuraminate: step 3/5. In terms of biological role, converts N-acetylmannosamine-6-phosphate (ManNAc-6-P) to N-acetylglucosamine-6-phosphate (GlcNAc-6-P). The protein is Putative N-acetylmannosamine-6-phosphate 2-epimerase of Borrelia garinii subsp. bavariensis (strain ATCC BAA-2496 / DSM 23469 / PBi) (Borreliella bavariensis).